A 53-amino-acid polypeptide reads, in one-letter code: Lectin alpha chain (53 aa).

This sequence belongs to the leguminous lectin family. In terms of assembly, tetramer of two alpha and two beta chains.

The polypeptide is Lectin alpha chain (Lathyrus clymenum (Spanish vetchling)).